The following is a 156-amino-acid chain: C-type lectin lectoxin-Phi1 (156 aa).

The N-terminal stretch at 1-23 (MGRFIFVSLGLLVLAFSLSGIGA) is a signal peptide. 3 disulfides stabilise this stretch: C27/C38, C55/C154, and C129/C146. The C-type lectin domain occupies 34–155 (HNVSCYKLIN…CNRRHRFLCK (122 aa)). N-linked (GlcNAc...) asparagine glycosylation is found at N35 and N109. Positions 119 to 121 (EPN) match the Mannose-binding motif. 3 residues coordinate Ca(2+): E127, N142, and D143.

The protein belongs to the true venom lectin family. In terms of tissue distribution, expressed by the venom gland.

It is found in the secreted. In terms of biological role, mannose-binding lectin which recognizes specific carbohydrate structures and agglutinates a variety of animal cells by binding to cell-surface glycoproteins and glycolipids. May be a calcium-dependent lectin. The protein is C-type lectin lectoxin-Phi1 of Philodryas olfersii (Green snake).